The sequence spans 489 residues: Betaine aldehyde dehydrogenase (489 aa).

Residues threonine 26 and aspartate 93 each contribute to the K(+) site. Residue 150–152 (GAW) coordinates NAD(+). The active-site Charge relay system is lysine 162. An NAD(+)-binding site is contributed by 176-179 (KPSE). Valine 180 is a binding site for K(+). 229 to 232 (GVET) is an NAD(+) binding site. Leucine 245 is a binding site for K(+). Glutamate 251 functions as the Proton acceptor in the catalytic mechanism. Residues glycine 253, cysteine 285, and glutamate 386 each contribute to the NAD(+) site. The active-site Nucleophile is the cysteine 285. The residue at position 285 (cysteine 285) is a Cysteine sulfenic acid (-SOH). Residues lysine 456 and glycine 459 each contribute to the K(+) site. The active-site Charge relay system is the glutamate 463.

Belongs to the aldehyde dehydrogenase family. In terms of assembly, dimer of dimers. It depends on K(+) as a cofactor.

It catalyses the reaction betaine aldehyde + NAD(+) + H2O = glycine betaine + NADH + 2 H(+). The protein operates within amine and polyamine biosynthesis; betaine biosynthesis via choline pathway; betaine from betaine aldehyde: step 1/1. Its function is as follows. Involved in the biosynthesis of the osmoprotectant glycine betaine. Catalyzes the irreversible oxidation of betaine aldehyde to the corresponding acid. In Burkholderia pseudomallei (strain 1106a), this protein is Betaine aldehyde dehydrogenase.